Reading from the N-terminus, the 531-residue chain is Tyrosine/DOPA decarboxylase 2 (531 aa).

Lys319 carries the post-translational modification N6-(pyridoxal phosphate)lysine.

Belongs to the group II decarboxylase family. Homodimer. The cofactor is pyridoxal 5'-phosphate. Predominantly expressed in the roots and stems, while a lower level expression is seen in the sepals and carpels of fully expanded flowers.

It carries out the reaction L-tyrosine + H(+) = tyramine + CO2. The catalysed reaction is L-dopa + H(+) = dopamine + CO2. It catalyses the reaction 5-hydroxy-L-tryptophan + H(+) = serotonin + CO2. Functionally, marginally higher substrate specificity for L-DOPA over L-tyrosine. This is Tyrosine/DOPA decarboxylase 2 (TYDC2) from Papaver somniferum (Opium poppy).